Here is a 296-residue protein sequence, read N- to C-terminus: Cell division protein DivIB (296 aa).

Over 1-25 (MMEDKIIHTPRFDEQRRMRRKKRQR) the chain is Cytoplasmic. Residues 26-46 (LQLFIFLSIVAIVSLILIYMF) traverse the membrane as a helical segment. Over 47-296 (TSISYVKKIS…KELNQVKKNS (250 aa)) the chain is Extracellular. A POTRA domain is found at 50-118 (SYVKKISVND…NTVSINVEEY (69 aa)).

It belongs to the FtsQ/DivIB family. DivIB subfamily.

Its subcellular location is the cell membrane. In terms of biological role, cell division protein that may be involved in stabilizing or promoting the assembly of the division complex. In Macrococcus caseolyticus (strain JCSC5402) (Macrococcoides caseolyticum), this protein is Cell division protein DivIB.